A 131-amino-acid polypeptide reads, in one-letter code: Fumarate reductase subunit C (131 aa).

Transmembrane regions (helical) follow at residues 30–50 (EGTA…LFAL), 61–81 (IGFL…AAAL), and 110–130 (IKGL…VALF).

This sequence belongs to the FrdC family. Part of an enzyme complex containing four subunits: a flavoprotein (FrdA), an iron-sulfur protein (FrdB), and two hydrophobic anchor proteins (FrdC and FrdD).

It is found in the cell inner membrane. Two distinct, membrane-bound, FAD-containing enzymes are responsible for the catalysis of fumarate and succinate interconversion; fumarate reductase is used in anaerobic growth, and succinate dehydrogenase is used in aerobic growth. Anchors the catalytic components of the fumarate reductase complex to the cell inner membrane, binds quinones. This is Fumarate reductase subunit C from Klebsiella pneumoniae (strain 342).